The sequence spans 802 residues: Epithelial sodium channel subunit delta (802 aa).

At 1–250 (MRAVLSQKTT…CSRGNRLKTT (250 aa)) the chain is on the cytoplasmic side. The segment at 145–211 (KQPHGGALTS…PPPPKEGHQE (67 aa)) is disordered. The segment covering 166–176 (CHLKGWQHRPT) has biased composition (basic residues). Positions 192–205 (PPRPGPPSAPPPPP) are enriched in pro residues. Residues 251–271 (SWGLLSLGALVALCWQLGLLF) form a helical membrane-spanning segment. The Extracellular segment spans residues 272–694 (ERHWHRPVLM…VPQLLSAMGS (423 aa)). Residues asparagine 330 and asparagine 548 are each glycosylated (N-linked (GlcNAc...) asparagine). Residues 695-715 (LCSLWFGASVLSLLELLELLL) traverse the membrane as a helical segment. Topologically, residues 716-802 (DASALTLVLG…GPQPLETLDT (87 aa)) are cytoplasmic. The disordered stretch occupies residues 738-777 (RASPASGASSIKPEASQMPPPAGGTSDDPEPSGPHLPRVM).

It belongs to the amiloride-sensitive sodium channel (TC 1.A.6) family. SCNN1D subfamily. Can form an alternative heterotrimeric epithelial sodium channel (ENaC), composed of a delta (SCNN1D), beta (SCNN1B), and gamma (SCNN1G) subunit, where the delta (SCNN1D) subunit replaces the alpha (SCNN1A) subunit. In terms of tissue distribution, not specifically expressed in epithelial cells.

It localises to the apical cell membrane. The catalysed reaction is Na(+)(in) = Na(+)(out). With respect to regulation, originally identified and characterized by its inhibition by the diuretic drug amiloride. Potential alternative pore-forming subunit of the epithelial sodium channel (ENaC), capable of replacing the alpha/SCNN1A subunit, creating a more active channel with distinct properties. ENaC functions in epithelial tissues, where it facilitates the electrodiffusion of sodium ions from the extracellular fluid through the apical membrane of cells, with water following osmotically, regulating sodium balance and fluid homeostasis. This subunit could also function independently as a sodium channel or assemble into other tissue-specific heterotrimeric sodium channels. Functionally, ENaC channels including this isoform exhibit greater conductance. This Homo sapiens (Human) protein is Epithelial sodium channel subunit delta.